Consider the following 327-residue polypeptide: Phosphate acyltransferase (327 aa).

The protein belongs to the PlsX family. Homodimer. Probably interacts with PlsY.

The protein localises to the cytoplasm. It catalyses the reaction a fatty acyl-[ACP] + phosphate = an acyl phosphate + holo-[ACP]. Its pathway is lipid metabolism; phospholipid metabolism. Its function is as follows. Catalyzes the reversible formation of acyl-phosphate (acyl-PO(4)) from acyl-[acyl-carrier-protein] (acyl-ACP). This enzyme utilizes acyl-ACP as fatty acyl donor, but not acyl-CoA. The sequence is that of Phosphate acyltransferase from Thermotoga maritima (strain ATCC 43589 / DSM 3109 / JCM 10099 / NBRC 100826 / MSB8).